We begin with the raw amino-acid sequence, 801 residues long: Glycerol-3-phosphate acyltransferase 2, mitochondrial (801 aa).

Residues 1-24 form a disordered region; that stretch reads MDTMLKSNPQTQQRSNHNGQETSL. The Cytoplasmic segment spans residues 1-305; the sequence is MDTMLKSNPQ…PGPRLSALGQ (305 aa). The acyltransferase stretch occupies residues 180–290; the sequence is QLHKGQMKMV…SGQPLLIFLE (111 aa). Residues 205 to 210 carry the HXXXXD motif motif; the sequence is HKSLLD. The helical transmembrane segment at 306-332 threads the bilayer; sequence AWLGVVIQAVQAGIISDATLVPVAIAY. The Mitochondrial intermembrane segment spans residues 333–449; sequence DLVPDAPCNM…QLLVRRLSRH (117 aa). The helical transmembrane segment at 450–472 threads the bilayer; it reads VLSASVASSAVMSTAIMATLLLL. Topologically, residues 473 to 801 are cytoplasmic; the sequence is KHQKGVVLSQ…EQFIRQFICS (329 aa). Ser662 is subject to Phosphoserine. Phosphothreonine is present on Thr666. Phosphoserine is present on residues Ser668 and Ser670.

Belongs to the GPAT/DAPAT family. Interacts with PIWIL2. In terms of tissue distribution, highly expressed in the testis. Expressed at lower levels in the heart, liver, kidney, spleen and adipose cells. Only detected in primary spermatocytes.

The protein localises to the mitochondrion outer membrane. The enzyme catalyses sn-glycerol 3-phosphate + an acyl-CoA = a 1-acyl-sn-glycero-3-phosphate + CoA. It carries out the reaction a 1-acyl-sn-glycero-3-phosphate + an acyl-CoA = a 1,2-diacyl-sn-glycero-3-phosphate + CoA. It catalyses the reaction 1-(9Z-octadecenoyl)-sn-glycero-3-phosphate + (9Z)-octadecenoyl-CoA = 1,2-di-(9Z-octadecenoyl)-sn-glycero-3-phosphate + CoA. The catalysed reaction is 1-(9Z-octadecenoyl)-sn-glycero-3-phosphate + (5Z,8Z,11Z,14Z)-eicosatetraenoyl-CoA = 1-(9Z)-octadecenoyl-2-(5Z,8Z,11Z,14Z)-eicosatetraenoyl-sn-glycero-3-phosphate + CoA. The enzyme catalyses (5Z,8Z,11Z,14Z)-eicosatetraenoyl-CoA + sn-glycerol 3-phosphate = 1-(5Z,8Z,11Z,14Z-eicosatetraenoyl)-sn-glycero-3-phosphate + CoA. Its pathway is phospholipid metabolism; CDP-diacylglycerol biosynthesis; CDP-diacylglycerol from sn-glycerol 3-phosphate: step 1/3. With respect to regulation, inhibited by N-ethylmaleimide (NEM). In terms of biological role, transfers an acyl-group from acyl-ACP to the sn-1 position of glycerol-3-phosphate producing a lysophosphatidic acid (LPA), an essential step for the triacylglycerol (TAG) and glycerophospholipids. In vitro also transfers an acyl-group from acyl-ACP to the LPA producing a phosphatidic acid (PA). Prefers arachidonoyl-CoA as the acyl donor. Required for primary processing step during piRNA biosynthesis. Molecular mechanisms by which it promotes piRNA biosynthesis are unclear and do not involve its acyltransferase activity. The sequence is that of Glycerol-3-phosphate acyltransferase 2, mitochondrial from Mus musculus (Mouse).